A 204-amino-acid polypeptide reads, in one-letter code: Small ribosomal subunit protein uS4 (204 aa).

The tract at residues 22–43 (SGKELARRPYAPGDHGNTGRRP) is disordered. In terms of domain architecture, S4 RNA-binding spans 94-154 (TRLDSVVFRL…ERSKKIVPIL (61 aa)).

It belongs to the universal ribosomal protein uS4 family. In terms of assembly, part of the 30S ribosomal subunit. Contacts protein S5. The interaction surface between S4 and S5 is involved in control of translational fidelity.

One of the primary rRNA binding proteins, it binds directly to 16S rRNA where it nucleates assembly of the body of the 30S subunit. In terms of biological role, with S5 and S12 plays an important role in translational accuracy. The chain is Small ribosomal subunit protein uS4 from Oenococcus oeni (strain ATCC BAA-331 / PSU-1).